The sequence spans 594 residues: Alpha-1,4-glucan:maltose-1-phosphate maltosyltransferase (594 aa).

A disordered region spans residues 244–270 (NRKGRNNSLTPGPDDPGSPYAIGSEEG). 3 residues coordinate alpha-maltose 1-phosphate: Lys246, Gln306, and Asp341. The active-site Nucleophile is Asp377. Residue Asn378 coordinates alpha-maltose 1-phosphate. Glu406 acts as the Proton donor in catalysis. 517-518 (KY) contacts alpha-maltose 1-phosphate.

Belongs to the glycosyl hydrolase 13 family. GlgE subfamily. Homodimer.

It catalyses the reaction alpha-maltose 1-phosphate + [(1-&gt;4)-alpha-D-glucosyl](n) = [(1-&gt;4)-alpha-D-glucosyl](n+2) + phosphate. In terms of biological role, maltosyltransferase that uses maltose 1-phosphate (M1P) as the sugar donor to elongate linear or branched alpha-(1-&gt;4)-glucans. Is involved in a branched alpha-glucan biosynthetic pathway from trehalose, together with TreS, Mak and GlgB. This chain is Alpha-1,4-glucan:maltose-1-phosphate maltosyltransferase, found in Cereibacter sphaeroides (Rhodobacter sphaeroides).